The sequence spans 60 residues: Large ribosomal subunit protein uL30 (60 aa).

Belongs to the universal ribosomal protein uL30 family. Part of the 50S ribosomal subunit.

The polypeptide is Large ribosomal subunit protein uL30 (Verminephrobacter eiseniae (strain EF01-2)).